The chain runs to 174 residues: Eukaryotic translation elongation factor 1 epsilon-1 (174 aa).

The residue at position 2 (A2) is an N-acetylalanine. An N-terminal region spans residues 2 to 56 (AAAAELRLLEKSLGLKPGNKYSAQGERQIPVLQTNNGPSLMGLSTIATHLVKQAS). The GST C-terminal domain maps to 50-173 (HLVKQASKEH…FIKNRLYANS (124 aa)). The tract at residues 57-63 (KEHLLGS) is linker. Residues 64 to 152 (TAEEKAMVQQ…SRWFCHIQHY (89 aa)) form a C-terminal region. K138 is subject to N6-acetyllysine. Positions 153 to 169 (PDIRQHLSSIVFIKNRL) form a coiled coil.

In terms of assembly, part of a multisubunit complex that groups tRNA ligases for Arg (RARS1), Asp (DARS1), Gln (QARS1), Ile (IARS1), Leu (LARS1), Lys (KARS1), Met (MARS1) the bifunctional ligase for Glu and Pro (EPRS1) and the auxiliary subunits AIMP1/p43, AIMP2/p38 and EEF1E1/p18. Can interact simultaneously with MARS1 and EPRS1. Forms a linear complex that contains MARS1, EEF1E1, EPRS1 and AIMP2 that is at the core of the multisubunit complex. Interacts with ATM and ATR. The interaction with ATM, which takes place independently of TP53, is induced by DNA damage that may occur during genotoxic stress or cell growth. The interaction with ATR is enhanced by UV irradiation.

The protein localises to the cytoplasm. Its subcellular location is the nucleus. Functionally, positive modulator of ATM response to DNA damage. The protein is Eukaryotic translation elongation factor 1 epsilon-1 (Eef1e1) of Mus musculus (Mouse).